We begin with the raw amino-acid sequence, 339 residues long: NADPH dehydrogenase (339 aa).

An FMN-binding site is contributed by 21-24 (PPMC). Y26 is a substrate binding site. Residues A57 and Q99 each coordinate FMN. Substrate is bound at residue 162–165 (HGAH). FMN contacts are provided by residues R215 and 307 to 308 (GR).

The protein belongs to the NADH:flavin oxidoreductase/NADH oxidase family. NamA subfamily. Homotetramer. FMN is required as a cofactor.

It carries out the reaction A + NADPH + H(+) = AH2 + NADP(+). Functionally, catalyzes the reduction of the double bond of an array of alpha,beta-unsaturated aldehydes and ketones. It also reduces the nitro group of nitroester and nitroaromatic compounds. It could have a role in detoxification processes. This is NADPH dehydrogenase from Clostridium acetobutylicum (strain ATCC 824 / DSM 792 / JCM 1419 / IAM 19013 / LMG 5710 / NBRC 13948 / NRRL B-527 / VKM B-1787 / 2291 / W).